The sequence spans 299 residues: Dihydroorotate dehydrogenase B (NAD(+)), catalytic subunit (299 aa).

FMN contacts are provided by residues Ser19 and 43–44 (KS). Substrate is bound by residues Lys43, 67 to 71 (NAMGL), and Asn121. Asn121 lines the FMN pocket. Cys124 serves as the catalytic Nucleophile. The FMN site is built by Lys159 and Ile185. Substrate is bound at residue 186-187 (NT). Residues Gly211, 237-238 (GG), and 259-260 (GT) contribute to the FMN site.

This sequence belongs to the dihydroorotate dehydrogenase family. Type 1 subfamily. In terms of assembly, heterotetramer of 2 PyrK and 2 PyrD type B subunits. Requires FMN as cofactor.

The protein localises to the cytoplasm. The catalysed reaction is (S)-dihydroorotate + NAD(+) = orotate + NADH + H(+). It functions in the pathway pyrimidine metabolism; UMP biosynthesis via de novo pathway; orotate from (S)-dihydroorotate (NAD(+) route): step 1/1. Functionally, catalyzes the conversion of dihydroorotate to orotate with NAD(+) as electron acceptor. The protein is Dihydroorotate dehydrogenase B (NAD(+)), catalytic subunit (pyrD) of Pyrococcus abyssi (strain GE5 / Orsay).